The sequence spans 358 residues: MDYTPLIEKRRQRLEELETVIAEPDFFNDQKKASEIMREHRRLKELMETWDSLNATEQQLADNQELAKTDDPELAELAALEIPELEAALEKLRSDVQYSLLPRDTTEDRDAIIEIRAGTGGDEASLFAGDLLRMYQRFAEERGWRFEHLESSPSDVGGFKEVVCRIAGEEVFRFLKYEGGVHRVQRVPATETQGRIHTSTATVAVMPEAEEVDIEIRPEDLRIEVCRSGGAGGQHVNKTESAVQIWHIPTGVYVRCEEERSQMKNREKGMKILRAKLFEAKKREEAEKYSAARRNLIGSGGREEKIRTYNFPQNRLTDHRIGYTSHNLDGILMGQLEDLIMALQHAEMQERLAEAGMS.

Glutamine 234 carries the post-translational modification N5-methylglutamine.

It belongs to the prokaryotic/mitochondrial release factor family. In terms of processing, methylated by PrmC. Methylation increases the termination efficiency of RF1.

The protein localises to the cytoplasm. In terms of biological role, peptide chain release factor 1 directs the termination of translation in response to the peptide chain termination codons UAG and UAA. The sequence is that of Peptide chain release factor 1 from Akkermansia muciniphila (strain ATCC BAA-835 / DSM 22959 / JCM 33894 / BCRC 81048 / CCUG 64013 / CIP 107961 / Muc).